Here is a 354-residue protein sequence, read N- to C-terminus: Uroporphyrinogen decarboxylase (354 aa).

Residues 27–31 (RQAGR), D77, Y154, S209, and H327 each bind substrate.

This sequence belongs to the uroporphyrinogen decarboxylase family. Homodimer.

The protein localises to the cytoplasm. The catalysed reaction is uroporphyrinogen III + 4 H(+) = coproporphyrinogen III + 4 CO2. The protein operates within porphyrin-containing compound metabolism; protoporphyrin-IX biosynthesis; coproporphyrinogen-III from 5-aminolevulinate: step 4/4. In terms of biological role, catalyzes the decarboxylation of four acetate groups of uroporphyrinogen-III to yield coproporphyrinogen-III. The polypeptide is Uroporphyrinogen decarboxylase (Shewanella amazonensis (strain ATCC BAA-1098 / SB2B)).